Reading from the N-terminus, the 784-residue chain is LPS-assembly protein LptD (784 aa).

An N-terminal signal peptide occupies residues 1-24 (MKKRIPTLLATMIASALYSHQGLA). Intrachain disulfides connect Cys31/Cys724 and Cys173/Cys725.

The protein belongs to the LptD family. In terms of assembly, component of the lipopolysaccharide transport and assembly complex. Interacts with LptE and LptA. Contains two intramolecular disulfide bonds.

Its subcellular location is the cell outer membrane. Functionally, together with LptE, is involved in the assembly of lipopolysaccharide (LPS) at the surface of the outer membrane. This is LPS-assembly protein LptD from Salmonella typhi.